Reading from the N-terminus, the 804-residue chain is SH3-containing GRB2-like protein 3-interacting protein 1 (804 aa).

Disordered regions lie at residues 1–90, 124–181, and 199–254; these read MMEG…EESH, LSPS…GPPL, and IWGS…QSAT. Over residues 16 to 34 the composition is skewed to basic and acidic residues; sequence RKKEKDTDSTGSPDRDGIK. Residues Ser-54, Ser-80, Ser-81, Ser-83, Ser-125, Ser-127, Ser-132, and Ser-145 each carry the phosphoserine modification. Phosphothreonine is present on residues Thr-156 and Thr-158. A Phosphoserine modification is found at Ser-212. The span at 221–236 shows a compositional bias: pro residues; the sequence is TGTPPPLPPKNVPATP. Residues Thr-223 and Thr-235 each carry the phosphothreonine modification. Phosphoserine occurs at positions 241, 263, 276, 292, and 295. Over residues 289 to 309 the composition is skewed to basic and acidic residues; sequence VHFSDTSPEHVTPELTPREKV. Residues 289–500 form a disordered region; the sequence is VHFSDTSPEH…LSAATTPTVE (212 aa). Phosphothreonine is present on residues Thr-300 and Thr-304. Over residues 322-346 the composition is skewed to pro residues; sequence SPAPGPLGPPGPTGPPGPPGPPRNV. Phosphoserine is present on Ser-348. A compositionally biased stretch (basic and acidic residues) spans 354–369; sequence EVQKKVAEQTFIKDDY. Ser-375 carries the post-translational modification Phosphoserine. Thr-386 carries the phosphothreonine modification. Over residues 413-432 the composition is skewed to low complexity; the sequence is TSGASSPARPATPLLPCSST. A compositionally biased stretch (pro residues) spans 433–451; sequence TPPPPPPRPPSRPKLPPGK. Composition is skewed to low complexity over residues 458–468 and 475–498; these read SRPFSPPIHSS and PLAR…TTPT. At Ser-462 the chain carries Phosphoserine. The MHD domain occupies 535-803; that stretch reads TLPVAAAFTE…RFAAGKYLAD (269 aa). Interaction with DPF motifs-containing proteins stretches follow at residues 537-543, 569-571, 643-646, and 789-794; these read PVAAAFT, SFP, TYYN, and SLIKKR. Residues 625–804 are necessary and sufficient to mediate interaction with CANX; the sequence is MPNLMTHLKK…FAAGKYLADN (180 aa).

In terms of assembly, interacts with proteins essential or regulating the formation of functional clathrin-coated pits. Interacts with CANX. Interacts with AP2A1. Interacts with EPS15. Interacts with SH3GL3. Interacts with AMPH. Interacts with ITSN1 (via SH3 domains). Interacts with and REPS1.

The protein resides in the membrane. Its subcellular location is the clathrin-coated pit. May function in clathrin-mediated endocytosis. Has both a membrane binding/tubulating activity and the ability to recruit proteins essential to the formation of functional clathrin-coated pits. Has a preference for membranes enriched in phosphatidylserine and phosphoinositides and is required for the endocytosis of the transferrin receptor. May also bind tubulin. May play a role in the regulation of energy homeostasis. This Pongo abelii (Sumatran orangutan) protein is SH3-containing GRB2-like protein 3-interacting protein 1 (SGIP1).